Here is a 569-residue protein sequence, read N- to C-terminus: Putative ABC transporter ATP-binding protein TTE1589 (569 aa).

2 ABC transporter domains span residues 8-248 (IIVK…IGLM) and 309-542 (IQAK…LSLK). Residues 43-50 (GPSGAGKS) and 342-349 (GHNGSGKT) contribute to the ATP site.

Belongs to the ABC transporter superfamily.

It is found in the cell membrane. In terms of biological role, probably part of an ABC transporter complex. Responsible for energy coupling to the transport system. The protein is Putative ABC transporter ATP-binding protein TTE1589 of Caldanaerobacter subterraneus subsp. tengcongensis (strain DSM 15242 / JCM 11007 / NBRC 100824 / MB4) (Thermoanaerobacter tengcongensis).